The sequence spans 126 residues: Profilin-1A (126 aa).

The segment at 2 to 36 (SWQTYVDTNLVGTGAVTQAAILGLDGNTWATSAGF) is actin binding. The residue at position 104 (lysine 104) is an N6,N6,N6-trimethyllysine.

Belongs to the profilin family. In terms of assembly, occurs in many kinds of cells as a complex with monomeric actin in a 1:1 ratio.

It localises to the cytoplasm. The protein localises to the cytoskeleton. Binds to actin and affects the structure of the cytoskeleton. At high concentrations, profilin prevents the polymerization of actin, whereas it enhances it at low concentrations. By binding to PIP2, it inhibits the formation of IP3 and DG. This Acanthamoeba castellanii (Amoeba) protein is Profilin-1A.